Consider the following 115-residue polypeptide: MELILSAGIGTLTASGVYLLLRPRTYQVIIGLSLLSFAVNLFIFGMGRLRVNAPPILDPGGVGDLARYTDPVPQALVLTAIVIGFAMTALFLVVLLASRGFTGTDHVDGREQRGD.

A run of 3 helical transmembrane segments spans residues Ile4–Leu21, Val28–Gly47, and Ala75–Ala97.

Belongs to the CPA3 antiporters (TC 2.A.63) subunit C family. As to quaternary structure, may form a hetero-oligomeric complex that consists of six subunits: PhaAB, PhaC, PhaD, PhaE, PhaF and PhaG.

Its subcellular location is the cell membrane. In terms of biological role, part of a K(+) efflux system which is required for the adaptation of R.meliloti to alkaline pH as well as for the infection process during symbiotic nodule development. The chain is Probable K(+)/H(+) antiporter subunit C (phaC) from Rhizobium meliloti (strain 1021) (Ensifer meliloti).